Consider the following 375-residue polypeptide: Glucokinase 1 (375 aa).

25–30 (CDVGGS) contacts ATP.

The protein belongs to the bacterial glucokinase family. As to quaternary structure, monomer. Post-translationally, the N-terminus is blocked.

The catalysed reaction is D-glucose + ATP = D-glucose 6-phosphate + ADP + H(+). The protein is Glucokinase 1 (GK1) of Trichomonas vaginalis.